The primary structure comprises 247 residues: uncharacterized protein (247 aa).

Positions 11, 85, and 119 each coordinate NADP(+). S136 serves as the catalytic Proton donor. Y150, K154, V181, and T183 together coordinate NADP(+). The active-site Proton acceptor is Y150. The active-site Lowers pKa of active site Tyr is K154.

This sequence belongs to the short-chain dehydrogenases/reductases (SDR) family.

This is an uncharacterized protein from Schizosaccharomyces pombe (strain 972 / ATCC 24843) (Fission yeast).